The chain runs to 732 residues: Elongation factor 2 (732 aa).

The tr-type G domain maps to 19–260; sequence ERIRNMGIAA…MVVRHLPNPL (242 aa). GTP contacts are provided by residues 28 to 35, 94 to 98, and 148 to 151; these read AHIDHGKT, DTPGH, and NKVD. H597 is subject to Diphthamide.

Belongs to the TRAFAC class translation factor GTPase superfamily. Classic translation factor GTPase family. EF-G/EF-2 subfamily.

It localises to the cytoplasm. Functionally, catalyzes the GTP-dependent ribosomal translocation step during translation elongation. During this step, the ribosome changes from the pre-translocational (PRE) to the post-translocational (POST) state as the newly formed A-site-bound peptidyl-tRNA and P-site-bound deacylated tRNA move to the P and E sites, respectively. Catalyzes the coordinated movement of the two tRNA molecules, the mRNA and conformational changes in the ribosome. The protein is Elongation factor 2 of Thermococcus onnurineus (strain NA1).